Reading from the N-terminus, the 232-residue chain is GDT1-like protein 5 (232 aa).

The next 6 membrane-spanning stretches (helical) occupy residues 13–33, 40–60, 72–92, 135–155, 175–195, and 207–227; these read LAMT…AILA, LVLA…VSLG, THHV…WEGF, PFVL…TFFG, FGVV…AVMG, and MVGL…YLSG.

The protein belongs to the GDT1 family.

Its subcellular location is the membrane. This is GDT1-like protein 5 from Oryza sativa subsp. japonica (Rice).